Reading from the N-terminus, the 124-residue chain is Immunoglobulin lambda variable 5-52 (124 aa).

The N-terminal stretch at 1–19 (MAWTLLLLVLLSHCTGSLS) is a signal peptide. Positions 20–44 (QPVLTQPSSHSASSGASVRLTCMLS) are framework-1. The Ig-like domain occupies 21–124 (PVLTQPSSHS…CGTWHSNSKT (104 aa)). A disulfide bond links Cys-41 and Cys-115. A complementarity-determining-1 region spans residues 45–53 (SGFSVGDFW). The framework-2 stretch occupies residues 54 to 70 (IRWYQQKPGNPPRYLLY). Positions 71–77 (YHSDSNK) are complementarity-determining-2. Positions 78–115 (GQGSGVPSRFSGSNDASANAGILRISGLQPEDEADYYC) are framework-3. A complementarity-determining-3 region spans residues 116 to 124 (GTWHSNSKT).

In terms of assembly, immunoglobulins are composed of two identical heavy chains and two identical light chains; disulfide-linked.

It localises to the secreted. It is found in the cell membrane. Functionally, v region of the variable domain of immunoglobulin light chains that participates in the antigen recognition. Immunoglobulins, also known as antibodies, are membrane-bound or secreted glycoproteins produced by B lymphocytes. In the recognition phase of humoral immunity, the membrane-bound immunoglobulins serve as receptors which, upon binding of a specific antigen, trigger the clonal expansion and differentiation of B lymphocytes into immunoglobulins-secreting plasma cells. Secreted immunoglobulins mediate the effector phase of humoral immunity, which results in the elimination of bound antigens. The antigen binding site is formed by the variable domain of one heavy chain, together with that of its associated light chain. Thus, each immunoglobulin has two antigen binding sites with remarkable affinity for a particular antigen. The variable domains are assembled by a process called V-(D)-J rearrangement and can then be subjected to somatic hypermutations which, after exposure to antigen and selection, allow affinity maturation for a particular antigen. The chain is Immunoglobulin lambda variable 5-52 from Homo sapiens (Human).